Reading from the N-terminus, the 261-residue chain is Kallikrein-1 (261 aa).

A signal peptide spans 1 to 18; it reads MRFLILFLALSLGGIDAA. The propeptide at 19–24 is activation peptide; sequence PPVQSR. Residues 25–258 form the Peptidase S1 domain; it reads IVGGFNCEKN…FNTWIRETMA (234 aa). 5 cysteine pairs are disulfide-bonded: C31/C173, C50/C66, C152/C219, C184/C198, and C209/C234. H65 serves as the catalytic Charge relay system. N-linked (GlcNAc...) asparagine glycosylation is present at N102. D120 serves as the catalytic Charge relay system. Catalysis depends on S213, which acts as the Charge relay system.

It belongs to the peptidase S1 family. Kallikrein subfamily.

The enzyme catalyses Preferential cleavage of Arg-|-Xaa bonds in small molecule substrates. Highly selective action to release kallidin (lysyl-bradykinin) from kininogen involves hydrolysis of Met-|-Xaa or Leu-|-Xaa.. In terms of biological role, glandular kallikreins cleave Met-Lys and Arg-Ser bonds in kininogen to release Lys-bradykinin. This Mus musculus (Mouse) protein is Kallikrein-1 (Klk1).